The chain runs to 247 residues: ATP synthase subunit a, chloroplastic (247 aa).

5 helical membrane-spanning segments follow: residues 38-58 (QVLITSWVVIVILLGSAIVTV), 95-115 (VPFIGTLFLFIFVSNWSGALL), 134-154 (INTTVALALLTSIAYFYAGLS), 199-219 (LVVVVLVSLVPSVVPIPVMFL), and 220-240 (GLFTSGIQALIFATLAAAYIG).

This sequence belongs to the ATPase A chain family. In terms of assembly, F-type ATPases have 2 components, CF(1) - the catalytic core - and CF(0) - the membrane proton channel. CF(1) has five subunits: alpha(3), beta(3), gamma(1), delta(1), epsilon(1). CF(0) has four main subunits: a, b, b' and c.

It localises to the plastid. The protein resides in the chloroplast thylakoid membrane. Functionally, key component of the proton channel; it plays a direct role in the translocation of protons across the membrane. The protein is ATP synthase subunit a, chloroplastic of Populus alba (White poplar).